The sequence spans 394 residues: uncharacterized protein (394 aa).

Helical transmembrane passes span 31 to 51 and 57 to 77; these read LAIL…LSGL and LIIA…SLLI.

It belongs to the chlamydial CPn_0129/CT_036/TC_0306 family.

The protein localises to the cell membrane. This is an uncharacterized protein from Chlamydia pneumoniae (Chlamydophila pneumoniae).